A 197-amino-acid polypeptide reads, in one-letter code: MLITLEGLDGSGKTTVWEALHDVYPDATFTREPTDSWYGEAVDRSIAADDADPLAELFLLTADHADHLSGTIEPALADGDLVISDRYSDSRFAYQAATLAASDVDIDRPLEYIKGIHAAFSRPPDATIYLDLDAREAAERAGRTNKFEQDGYLAAVRKNYERLIDAEPDRFVRIDASQSPEAVIARVEEVLSELLGE.

Residue 7 to 14 (GLDGSGKT) coordinates ATP.

This sequence belongs to the thymidylate kinase family.

It carries out the reaction dTMP + ATP = dTDP + ADP. The chain is Probable thymidylate kinase from Halorubrum lacusprofundi (strain ATCC 49239 / DSM 5036 / JCM 8891 / ACAM 34).